The primary structure comprises 305 residues: Large ribosomal subunit protein uL10 (305 aa).

This sequence belongs to the universal ribosomal protein uL10 family. As to quaternary structure, P0 forms a pentameric complex by interaction with dimers of P1 and P2. Post-translationally, phosphorylated.

Ribosomal protein P0 is the functional equivalent of E.coli protein L10. The protein is Large ribosomal subunit protein uL10 (rplp0) of Dictyostelium discoideum (Social amoeba).